Consider the following 292-residue polypeptide: BTB/POZ domain-containing protein KCTD7 (292 aa).

The tract at residues 1 to 27 is disordered; sequence MVVFSAASDSEKPGDAMSGADKGEEEY. Residues 56–144 form the BTB domain; that stretch reads IPLNVGGTYF…YAIGPLLENL (89 aa).

The protein resides in the cell membrane. The protein localises to the cytoplasm. Its subcellular location is the cytosol. The chain is BTB/POZ domain-containing protein KCTD7 (kctd7) from Danio rerio (Zebrafish).